We begin with the raw amino-acid sequence, 203 residues long: 2-hydroxychromene-2-carboxylate isomerase (203 aa).

Ser11 serves as the catalytic Nucleophile. Ser11 provides a ligand contact to glutathione. Substrate contacts are provided by residues Lys43, 53–54, and Tyr84; that span reads NR. Glutathione-binding positions include Val168 and 179–182; that span reads WGND.

This sequence belongs to the GST superfamily. NadH family. Requires glutathione as cofactor.

It catalyses the reaction 2-hydroxychromene-2-carboxylate = (3E)-4-(2-hydroxyphenyl)-2-oxobut-3-enoate. It functions in the pathway aromatic compound metabolism; naphthalene degradation. Involved in the naphthalene catabolic pathway. Catalyzes the reversible glutathione-dependent isomerization of 2-hydroxychromene-2-carboxylate (HCCA) to trans-O-hydroxybenzylidenepyruvate (THBPA). The chain is 2-hydroxychromene-2-carboxylate isomerase (nahD) from Pseudomonas putida (Arthrobacter siderocapsulatus).